The sequence spans 486 residues: Cardiolipin synthase A (486 aa).

Transmembrane regions (helical) follow at residues Thr3–Val23 and Met38–Val58. PLD phosphodiesterase domains follow at residues Met219–Arg246 and Glu399–Ser426. Residues His224, Lys226, Asp231, His404, Lys406, and Asp411 contribute to the active site.

This sequence belongs to the phospholipase D family. Cardiolipin synthase subfamily. ClsA sub-subfamily.

The protein resides in the cell inner membrane. The catalysed reaction is 2 a 1,2-diacyl-sn-glycero-3-phospho-(1'-sn-glycerol) = a cardiolipin + glycerol. In terms of biological role, catalyzes the reversible phosphatidyl group transfer from one phosphatidylglycerol molecule to another to form cardiolipin (CL) (diphosphatidylglycerol) and glycerol. In Salmonella choleraesuis (strain SC-B67), this protein is Cardiolipin synthase A.